We begin with the raw amino-acid sequence, 591 residues long: Adsorption protein P2 (591 aa).

The cysteines at positions 254 and 277 are disulfide-linked.

Its subcellular location is the virion. In terms of biological role, adsorption protein. In association with P31 and trimeric P5, forms the spike complexes located at the 5-fold vertices of the capsid. Involved in recognition and attachment to the receptor on the surface of the host. Likely triggers the processes of vertex disassembly, membrane tube formation, and subsequent DNA injection. Essential for viral infectivity. This chain is Adsorption protein P2 (II), found in Acinetobacter calcoaceticus (Arthrobacter siderocapsulatus).